The following is a 591-amino-acid chain: MKTGKIIKVSGPLVVAEGMDEANVYDVVKVGEKGLIGEIIEMRGDKASIQVYEETSGIGPGDPVITTGEPLSVELGPGLIESMFDGIQRPLDAFMKAANSAFLSKGVEVKSLNREKKWPFVPTAKVGDKVSAGDVIGTVQETAVVLHRIMVPFGVEGTIKEIKAGDFNVEEVIAVVETEKGDKNLTLMQKWPVRKGRPYARKLNPVEPMTTGQRVIDTFFPVAKGGAAAVPGPFGAGKTVVQHQVAKWGDTEIVVYVGCGERGNEMTDVLNEFPELKDPKTGESLMKRTVLIANTSNMPVAAREASIYTGITIAEYFRDMGYSVSIMADSTSRWAEALREMSGRLEEMPGDEGYPAYLGSRLADYYERAGKVVALGKDGREGAVTAIGAVSPPGGDISEPVTQSTLRIVKVFWGLDAQLAYKRHFPSINWLTSYSLYLEKMGEWMDAHVADDWSALRTEAMALLQEEANLEEIVRLVGMDALSEGDRLKLEVAKSIREDYLQQNAFHENDTYTSLNKQYKMLNLILSFKHEAEKALEAGVYLDKVLKLPVRDRIARSKYISEEEISKMDDILVELKSEMNKLISEGGVLNA.

Residue 232 to 239 (GPFGAGKT) participates in ATP binding.

It belongs to the ATPase alpha/beta chains family.

It catalyses the reaction ATP + H2O + 4 H(+)(in) = ADP + phosphate + 5 H(+)(out). Its function is as follows. Produces ATP from ADP in the presence of a proton gradient across the membrane. The V-type alpha chain is a catalytic subunit. The protein is V-type ATP synthase alpha chain of Clostridium perfringens (strain ATCC 13124 / DSM 756 / JCM 1290 / NCIMB 6125 / NCTC 8237 / Type A).